The chain runs to 248 residues: (2S)-[(R)-hydroxy(phenyl)methyl]succinyl-CoA dehydrogenase subunit BbsD (248 aa).

7 residues coordinate NAD(+): Ser-15, Asp-36, Asp-62, Ile-63, Asn-89, Tyr-153, and Lys-157. Tyr-153 functions as the Proton acceptor in the catalytic mechanism.

The protein belongs to the short-chain dehydrogenases/reductases (SDR) family. Heterotetramer composed of 2 inactive BbsC subunits and 2 active BbsD subunits.

The enzyme catalyses (2S)-[(R)-hydroxy(phenyl)methyl]succinyl-CoA + NAD(+) = (S)-2-benzoylsuccinyl-CoA + NADH + H(+). It functions in the pathway xenobiotic degradation; toluene degradation. Its activity is regulated as follows. Activity is probably regulated by the inactive BbsC subunit. Functionally, involved in an anaerobic toluene degradation pathway. Active subunit that catalyzes the oxidation of 2-(alpha-hydroxybenzyl)succinyl-CoA to 2-benzoylsuccinyl-CoA. In vitro, can catalyze the NADH-dependent reduction of the artificial substrates 2,2-dichloroacetophene and 2,4'-dichloroacetophenone. The polypeptide is (2S)-[(R)-hydroxy(phenyl)methyl]succinyl-CoA dehydrogenase subunit BbsD (Thauera aromatica).